Reading from the N-terminus, the 571-residue chain is Proline--tRNA ligase (571 aa).

The protein belongs to the class-II aminoacyl-tRNA synthetase family. ProS type 1 subfamily. Homodimer.

The protein localises to the cytoplasm. The catalysed reaction is tRNA(Pro) + L-proline + ATP = L-prolyl-tRNA(Pro) + AMP + diphosphate. Its function is as follows. Catalyzes the attachment of proline to tRNA(Pro) in a two-step reaction: proline is first activated by ATP to form Pro-AMP and then transferred to the acceptor end of tRNA(Pro). As ProRS can inadvertently accommodate and process non-cognate amino acids such as alanine and cysteine, to avoid such errors it has two additional distinct editing activities against alanine. One activity is designated as 'pretransfer' editing and involves the tRNA(Pro)-independent hydrolysis of activated Ala-AMP. The other activity is designated 'posttransfer' editing and involves deacylation of mischarged Ala-tRNA(Pro). The misacylated Cys-tRNA(Pro) is not edited by ProRS. In Vibrio parahaemolyticus serotype O3:K6 (strain RIMD 2210633), this protein is Proline--tRNA ligase.